Here is a 687-residue protein sequence, read N- to C-terminus: Ribosomal RNA processing protein 1 homolog (687 aa).

Residues 288-298 (DEEDDEVNAEE) show a composition bias toward acidic residues. Disordered stretches follow at residues 288-312 (DEED…RAGN) and 463-624 (VKEA…GSGK). Basic and acidic residues-rich tracts occupy residues 463 to 488 (VKEA…DQTK), 497 to 520 (PKND…EEPA), and 527 to 543 (HSKT…DEQP). Low complexity predominate over residues 554 to 564 (KAKPTPKTKAA). The segment covering 596–608 (KQANSKLPQSTPK) has biased composition (polar residues). Phosphothreonine is present on residues T617 and T620. The residue at position 622 (S622) is a Phosphoserine.

Belongs to the RRP1 family.

It localises to the nucleus. Functionally, may be involved in the generation of 28S rRNA. This is Ribosomal RNA processing protein 1 homolog (Nnp-1) from Drosophila melanogaster (Fruit fly).